The sequence spans 838 residues: U1 SNP1-associating protein 1 (838 aa).

The Cytoplasmic segment spans residues 1–536 (MSEYLAQTPC…VRPLRNSFPL (536 aa)). A required for ERAD-L function region spans residues 31–240 (HPLSTVGRLL…DFAPAHNSFF (210 aa)). Residues 259-318 (ERFVLEFISDATLSITQMNVKPDTTVKQVKDFICSVYTHSLNLRRNDIKLIYKGQLLHEN) form the Ubiquitin-like domain. The segment at 319–418 (NFAGNSSKIS…VPTDELYRKC (100 aa)) is important for HRD1 oligomer formation. Residues 345–535 (QEYTESGPGF…VVRPLRNSFP (191 aa)) form an interaction with HRD1 region. Phosphoserine occurs at positions 374, 376, and 379. Positions 437–490 (SSYLSVIKGDYGEIKIPISSNDYRINGDNILLSPSAIEQLESALNFKIERPRDS) are required for ERAD-L function and HRD1 oligomer formation. The helical transmembrane segment at 537 to 559 (LLVLIRTFYLIGYNSLVPFFIIL) threads the bilayer. At 560 to 563 (EFGS) the chain is on the extracellular side. Residues 564–583 (FLPWKYIILLSLLFIFRTVW) form a helical membrane-spanning segment. Over 584–838 (NTQEVWNLWR…QPHLYIPDED (255 aa)) the chain is Cytoplasmic. Positions 584 to 838 (NTQEVWNLWR…QPHLYIPDED (255 aa)) are interaction with DER1. The segment at 795–838 (ARDREQPAPSAQQQENEDEALIIPDEEEPTATGAQPHLYIPDED) is disordered. Acidic residues predominate over residues 809-823 (ENEDEALIIPDEEEP).

Component of the HRD1 ubiquitin ligase complex which contains the E3 ligase HRD1, its cofactors HRD3, USA1 and DER1, substrate recruiting factor YOS9 and CDC48-binding protein UBX2. Within the complex, interacts directly with HRD1 (via N-terminus) and DER1 (via C-terminus) and indirectly with HRD3. In ERAD-L, HRD3 and YOS9 jointly bind misfolded glycoproteins in the endoplasmic reticulum (ER) lumen. Movement of ERAD-L substrates through the ER membrane is facilitated by HRD1 and DER1 which have lateral gates facing each other and which distort the membrane region between the lateral gates, making it much thinner than a normal phospholipid bilayer. Substrates insert into the membrane as a hairpin loop with one strand interacting with DER1 and the other with HRD1. The HRD1 complex interacts with the heterotrimeric CDC48-NPL4-UFD1 ATPase complex which is recruited by UBX2 via its interaction with CDC48 and which moves ubiquitinated substrates to the cytosol for targeting to the proteasome.

Its subcellular location is the endoplasmic reticulum membrane. Scaffold protein of the endoplasmic reticulum-associated degradation (ERAD) (also known as endoplasmic reticulum quality control, ERQC) pathway involved in ubiquitin-dependent degradation of misfolded endoplasmic reticulum proteins. Component of the HRD1 ubiquitin ligase complex, which is part of the ERAD-L and ERAD-M pathways responsible for the rapid degradation of soluble lumenal and membrane proteins with misfolded lumenal domains (ERAD-L), or ER-membrane proteins with misfolded transmembrane domains (ERAD-M). Has multiple functions in ERAD including recruitment of DER1 to the HRD1 ubiquitin ligase, and regulation of HRD1 activity. Involved in oligomerization of HRD1 and in HRD1 autoubiquitination and degradation. In Saccharomyces cerevisiae (strain ATCC 204508 / S288c) (Baker's yeast), this protein is U1 SNP1-associating protein 1 (USA1).